Reading from the N-terminus, the 424-residue chain is UDP-N-acetylglucosamine 1-carboxyvinyltransferase (424 aa).

22-23 (KN) is a phosphoenolpyruvate binding site. Arg-93 lines the UDP-N-acetyl-alpha-D-glucosamine pocket. Cys-117 acts as the Proton donor in catalysis. Residue Cys-117 is modified to 2-(S-cysteinyl)pyruvic acid O-phosphothioketal. Residues 122–126 (RPVDL), 162–165 (KVSV), Asp-307, and Ile-329 each bind UDP-N-acetyl-alpha-D-glucosamine.

This sequence belongs to the EPSP synthase family. MurA subfamily.

Its subcellular location is the cytoplasm. It carries out the reaction phosphoenolpyruvate + UDP-N-acetyl-alpha-D-glucosamine = UDP-N-acetyl-3-O-(1-carboxyvinyl)-alpha-D-glucosamine + phosphate. It participates in cell wall biogenesis; peptidoglycan biosynthesis. Functionally, cell wall formation. Adds enolpyruvyl to UDP-N-acetylglucosamine. In Haemophilus influenzae (strain 86-028NP), this protein is UDP-N-acetylglucosamine 1-carboxyvinyltransferase.